Consider the following 83-residue polypeptide: Large ribosomal subunit protein eL31 (83 aa).

It belongs to the eukaryotic ribosomal protein eL31 family.

The protein is Large ribosomal subunit protein eL31 of Methanococcus vannielii (strain ATCC 35089 / DSM 1224 / JCM 13029 / OCM 148 / SB).